The following is a 379-amino-acid chain: Cytochrome b (379 aa).

Transmembrane regions (helical) follow at residues 33–53 (FGSLLGLCLIVQTLTGLFLAM), 77–98 (WLIRNLHANGASMFFICLYLHI), 113–133 (WNIGVVLLLLVMAAAFVGYVL), and 178–198 (FFTFHFLLPFTIIALTMLHLL). Heme b is bound by residues His-83 and His-97. His-182 and His-196 together coordinate heme b. His-201 serves as a coordination point for a ubiquinone. A run of 4 helical transmembrane segments spans residues 226–246 (YKDLLGATLMITTLLTLVLFS), 288–308 (LGGVLALLFSILILMIVPLLH), 320–340 (FSQTLFWLLISNVLILTWIGG), and 347–367 (FIIIGQLASVTYFTLFLVVMP).

This sequence belongs to the cytochrome b family. In terms of assembly, the cytochrome bc1 complex contains 3 respiratory subunits (MT-CYB, CYC1 and UQCRFS1), 2 core proteins (UQCRC1 and UQCRC2) and probably 6 low-molecular weight proteins. It depends on heme b as a cofactor.

It localises to the mitochondrion inner membrane. In terms of biological role, component of the ubiquinol-cytochrome c reductase complex (complex III or cytochrome b-c1 complex) that is part of the mitochondrial respiratory chain. The b-c1 complex mediates electron transfer from ubiquinol to cytochrome c. Contributes to the generation of a proton gradient across the mitochondrial membrane that is then used for ATP synthesis. The sequence is that of Cytochrome b (MT-CYB) from Iguana iguana (Common iguana).